The sequence spans 258 residues: MMSPLVIKLGGVLLESDNAMMRLFKALLDYQKSNKRHILIIHGGGRLIDDLMNKLSLPIEKKNGLRITQSEHINVITGALAGTANKILLSWALKYKINAVGLCLADGKSVNVEKLDQDLGHVGKAKPGSPLFLTKLCEQGILPIISSIGITDDGLLMNVNADLAATALATTLKANLILLSDISSILDGKGQRISEINYLQAKKLISQGIITNGMIVKVNAALEAARVLQRSIDIASWQNTDQLKLLFNGINIGTRVLV.

Substrate-binding positions include 44–45 (GG), Arg-66, and Asn-158. ATP-binding positions include 181-186 (DISSIL) and 209-211 (IIT).

Belongs to the acetylglutamate kinase family. ArgB subfamily. As to quaternary structure, homodimer.

Its subcellular location is the cytoplasm. The catalysed reaction is N-acetyl-L-glutamate + ATP = N-acetyl-L-glutamyl 5-phosphate + ADP. Its pathway is amino-acid biosynthesis; L-arginine biosynthesis; N(2)-acetyl-L-ornithine from L-glutamate: step 2/4. Catalyzes the ATP-dependent phosphorylation of N-acetyl-L-glutamate. This Buchnera aphidicola subsp. Schizaphis graminum (strain Sg) protein is Acetylglutamate kinase.